We begin with the raw amino-acid sequence, 287 residues long: Elongation factor Ts (287 aa).

The interval 80-83 (TDFL) is involved in Mg(2+) ion dislocation from EF-Tu.

It belongs to the EF-Ts family.

The protein localises to the cytoplasm. In terms of biological role, associates with the EF-Tu.GDP complex and induces the exchange of GDP to GTP. It remains bound to the aminoacyl-tRNA.EF-Tu.GTP complex up to the GTP hydrolysis stage on the ribosome. The sequence is that of Elongation factor Ts from Stutzerimonas stutzeri (strain A1501) (Pseudomonas stutzeri).